Here is a 295-residue protein sequence, read N- to C-terminus: Sulfotransferase 1E1 (295 aa).

Residue 48–53 (KSGTTW) participates in 3'-phosphoadenylyl sulfate binding. A substrate-binding site is contributed by 106 to 108 (KTH). The active-site Proton acceptor is the histidine 108. Arginine 130 and serine 138 together coordinate 3'-phosphoadenylyl sulfate. Serine 156 is modified (phosphoserine). 3'-phosphoadenylyl sulfate is bound by residues tyrosine 193, 227–232 (TSFQEM), and 257–259 (RKG).

It belongs to the sulfotransferase 1 family. Homodimer. Testis and at very low level in the placenta.

The protein resides in the cytoplasm. The protein localises to the cytosol. The enzyme catalyses estrone + 3'-phosphoadenylyl sulfate = estrone 3-sulfate + adenosine 3',5'-bisphosphate + H(+). The catalysed reaction is 17beta-estradiol + 3'-phosphoadenylyl sulfate = 17beta-estradiol 3-sulfate + adenosine 3',5'-bisphosphate + H(+). It catalyses the reaction (24S)-hydroxycholesterol + 3'-phosphoadenylyl sulfate = (24S)-hydroxycholesterol 3-sulfate + adenosine 3',5'-bisphosphate + H(+). It carries out the reaction 3beta-hydroxyandrost-5-en-17-one + 3'-phosphoadenylyl sulfate = dehydroepiandrosterone 3-sulfate + adenosine 3',5'-bisphosphate + H(+). The enzyme catalyses 4-ethylphenol + 3'-phosphoadenylyl sulfate = 4-ethylphenyl sulfate + adenosine 3',5'-bisphosphate + H(+). Its activity is regulated as follows. Inhibited by estradiol. Sulfotransferase that utilizes 3'-phospho-5'-adenylyl sulfate (PAPS) as sulfonate donor to catalyze the sulfate conjugation of estradiol and estrone. Is a key enzyme in estrogen homeostasis, the sulfation of estrogens leads to their inactivation. Also sulfates dehydroepiandrosterone, pregnenolone, (24S)-hydroxycholesterol and xenobiotic compounds like ethinylestradiol, equalenin, diethyl stilbesterol and 1-naphthol at significantly lower efficiency. Does not sulfonate cortisol, testosterone and dopamine. May play a role in gut microbiota-host metabolic interaction. O-sulfonates 4-ethylphenol (4-EP), a dietary tyrosine-derived metabolite produced by gut bacteria. The product 4-EPS crosses the blood-brain barrier and may negatively regulate oligodendrocyte maturation and myelination, affecting the functional connectivity of different brain regions associated with the limbic system. In Mus musculus (Mouse), this protein is Sulfotransferase 1E1 (Sult1e1).